Reading from the N-terminus, the 84-residue chain is Small ribosomal subunit protein uS17 (84 aa).

This sequence belongs to the universal ribosomal protein uS17 family. In terms of assembly, part of the 30S ribosomal subunit.

In terms of biological role, one of the primary rRNA binding proteins, it binds specifically to the 5'-end of 16S ribosomal RNA. This chain is Small ribosomal subunit protein uS17, found in Borrelia garinii subsp. bavariensis (strain ATCC BAA-2496 / DSM 23469 / PBi) (Borreliella bavariensis).